A 98-amino-acid chain; its full sequence is MISNAATSTPDRLTSTVRKTYPNFKVIVLNDDFNTFQHVSDCLLKYIPGMTGDRAWELTNQVHFDGLAIVWVGPQEQAELYHQQLRREGLTMAPLEKA.

This sequence belongs to the ClpS family. Binds to the N-terminal domain of the chaperone ClpA.

Functionally, involved in the modulation of the specificity of the ClpAP-mediated ATP-dependent protein degradation. The protein is ATP-dependent Clp protease adapter protein ClpS of Synechocystis sp. (strain ATCC 27184 / PCC 6803 / Kazusa).